Reading from the N-terminus, the 221-residue chain is NEDD4 family-interacting protein 1 (221 aa).

An N-acetylalanine modification is found at Ala-2. An interaction with UBE2L3 region spans residues 2–41 (ALALAALAAVEPACGTGYQQLQNEEEPGEREQTAGDAPPP). Residues 2 to 116 (ALALAALAAV…ADQLRIGNDG (115 aa)) are Cytoplasmic-facing. The tract at residues 15 to 45 (CGTGYQQLQNEEEPGEREQTAGDAPPPYSSI) is disordered. 3 short sequence motifs (PPxY motif) span residues 39-42 (PPPY), 64-67 (PPSY), and 74-76 (PSY). An interaction with ITCH region spans residues 42–76 (YSSISAESAAYFDYKDESGFPKPPSYNVATTLPSY). The chain crosses the membrane as a helical span at residues 117–137 (IFMLTFFMAFLFNWIGFFLSF). Topologically, residues 138–143 (CLTTSA) are extracellular. Residues 144–164 (AGRYGAISGFGLSLIKWILIV) form a helical membrane-spanning segment. The Cytoplasmic portion of the chain corresponds to 165 to 172 (RFSTYFPG). Residues 173–193 (YFDGQYWLWWVFLVLGFLLFL) traverse the membrane as a helical segment. The Extracellular segment spans residues 194-221 (RGFINYAKVRKMPETFSNLPRTRVLFIY).

As to quaternary structure, forms heterodimers with NDFIP2. Interacts with several E3 ubiquitin-protein ligases, including ITCH, NEDD4, NEDD4L and WWP2. The interaction with NEDD4, NEDD4L and ITCH leads to relocalization of these proteins to exosomes and eventually to exosomal secretion. Interacts with SR1402. Interacts with SLC11A2/DMT1. Interacts with PTEN. May interact with phosphorylated EGFR. Interacts with BRAT1. Interacts with KCNH2. Interacts with MAVS. Part of a complex containing ITCH, NDFIP1 and MAP3K7. Interacts (via N-terminus) with UBE2L3; the interaction mediates recruitment of UBE2L3 to ITCH. Post-translationally, ubiquitinated by NEDD4; mono-, di- and polyubiquitinated forms are detected. Ubiquitination regulates its degradation. In terms of processing, undergoes transient tyrosine phosphorylation following EGF stimulation, most probably by catalyzed by SRC. Phosphorylation SRC is enhanced in the presence of NDFIP2 which may act as a scaffold to recruit SRC to NDFIP1.

The protein localises to the endosome membrane. It localises to the golgi apparatus membrane. It is found in the synapse. The protein resides in the synaptosome. Its subcellular location is the cell projection. The protein localises to the dendrite. It localises to the secreted. Functionally, activates HECT domain-containing E3 ubiquitin-protein ligases, including NEDD4 and ITCH, and consequently modulates the stability of their targets. As a result, controls many cellular processes. Prevents chronic T-helper cell-mediated inflammation by activating ITCH and thus controlling JUNB degradation. Promotes pancreatic beta cell death through degradation of JUNB and inhibition of the unfolded protein response, leading to reduction of insulin secretion. Restricts the production of pro-inflammatory cytokines in effector Th17 T-cells by promoting ITCH-mediated ubiquitination degradation of RORC. Together with NDFIP2, limits the cytokine signaling and expansion of effector Th2 T-cells by promoting degradation of JAK1, probably by ITCH- and NEDD4L-mediated ubiquitination. Regulates peripheral T-cell tolerance to self and foreign antigens, forcing the exit of naive CD4+ T-cells from the cell cycle before they become effector T-cells. Negatively regulates RLR-mediated antiviral response by promoting SMURF1-mediated ubiquitination and subsequent degradation of MAVS. Negatively regulates KCNH2 potassium channel activity by decreasing its cell-surface expression and interfering with channel maturation through recruitment of NEDD4L to the Golgi apparatus where it mediates KCNH2 degradation. In cortical neurons, mediates the ubiquitination of the divalent metal transporter SLC11A2/DMT1 by NEDD4L, leading to its down-regulation and protection of the cells from cobalt and iron toxicity. Important for normal development of dendrites and dendritic spines in cortex. Enhances the ubiquitination of BRAT1 mediated by: NEDD4, NEDD4L and ITCH and is required for the nuclear localization of ubiquitinated BRAT1. Enhances the ITCH-mediated ubiquitination of MAP3K7 by recruiting E2 ubiquitin-conjugating enzyme UBE2L3 to ITCH. Modulates EGFR signaling through multiple pathways. In particular, may regulate the ratio of AKT1-to-MAPK8 signaling in response to EGF, acting on AKT1 probably through PTEN destabilization and on MAPK8 through ITCH-dependent MAP2K4 inactivation. As a result, may control cell growth rate. Inhibits cell proliferation by promoting PTEN nuclear localization and changing its signaling specificity. In Rattus norvegicus (Rat), this protein is NEDD4 family-interacting protein 1 (Ndfip1).